The sequence spans 137 residues: Putative pre-16S rRNA nuclease (137 aa).

Belongs to the YqgF nuclease family.

It localises to the cytoplasm. Functionally, could be a nuclease involved in processing of the 5'-end of pre-16S rRNA. This Anaeromyxobacter sp. (strain Fw109-5) protein is Putative pre-16S rRNA nuclease.